The chain runs to 200 residues: Elongation factor Ts (200 aa).

The involved in Mg(2+) ion dislocation from EF-Tu stretch occupies residues 81–84 (TDFV).

This sequence belongs to the EF-Ts family.

It localises to the cytoplasm. Associates with the EF-Tu.GDP complex and induces the exchange of GDP to GTP. It remains bound to the aminoacyl-tRNA.EF-Tu.GTP complex up to the GTP hydrolysis stage on the ribosome. The chain is Elongation factor Ts from Nitratidesulfovibrio vulgaris (strain DSM 19637 / Miyazaki F) (Desulfovibrio vulgaris).